The sequence spans 84 residues: MRGSSNRKIDPRIHYLVPKHEVLSIDEAYKILKELGIRPEQLPWIRASDPVARSINAKPGDIIRIIRKSQLYGEVVSYRYVISG.

This sequence belongs to the archaeal Rpo5/eukaryotic RPB5 RNA polymerase subunit family. In terms of assembly, part of the RNA polymerase complex.

It is found in the cytoplasm. The catalysed reaction is RNA(n) + a ribonucleoside 5'-triphosphate = RNA(n+1) + diphosphate. DNA-dependent RNA polymerase (RNAP) catalyzes the transcription of DNA into RNA using the four ribonucleoside triphosphates as substrates. This is DNA-directed RNA polymerase subunit Rpo5 from Saccharolobus islandicus (strain Y.N.15.51 / Yellowstone #2) (Sulfolobus islandicus).